Reading from the N-terminus, the 109-residue chain is Parvalbumin alpha (109 aa).

Residue serine 1 is modified to N-acetylserine. EF-hand domains are found at residues 38–73 (KSDAELAEIFNVLDGDQSGYIEVEELKNFLKCFSDG) and 77–109 (LNDKETSNFLAAGDSDGDHKIGVDEFKSMAKMT). 11 residues coordinate Ca(2+): aspartate 51, aspartate 53, serine 55, tyrosine 57, glutamate 59, glutamate 62, aspartate 90, aspartate 92, aspartate 94, lysine 96, and glutamate 101.

This sequence belongs to the parvalbumin family. Monomer.

In terms of biological role, in muscle, parvalbumin is thought to be involved in relaxation after contraction. It binds two calcium ions. This Raja clavata (Thornback ray) protein is Parvalbumin alpha.